Consider the following 271-residue polypeptide: Tryptophan synthase alpha chain (271 aa).

Active-site proton acceptor residues include E53 and D64.

It belongs to the TrpA family. Tetramer of two alpha and two beta chains.

It catalyses the reaction (1S,2R)-1-C-(indol-3-yl)glycerol 3-phosphate + L-serine = D-glyceraldehyde 3-phosphate + L-tryptophan + H2O. It participates in amino-acid biosynthesis; L-tryptophan biosynthesis; L-tryptophan from chorismate: step 5/5. Its function is as follows. The alpha subunit is responsible for the aldol cleavage of indoleglycerol phosphate to indole and glyceraldehyde 3-phosphate. This chain is Tryptophan synthase alpha chain, found in Streptomyces coelicolor (strain ATCC BAA-471 / A3(2) / M145).